The sequence spans 368 residues: E3 ubiquitin-protein ligase makorin (368 aa).

2 consecutive C3H1-type zinc fingers follow at residues 2-29 (STKR…HDWN) and 30-57 (DQPN…HVKV). The disordered stretch occupies residues 58-81 (SRNPTVAPPPSSSTTTRASSSLQP). The span at 69–78 (SSTTTRASSS) shows a compositional bias: low complexity. Residues 147 to 174 (PADLPICSFAAGGNCPYGEECPQMHGDL) form a C3H1-type 3 zinc finger. The segment at 175–202 (CTTCGKMCLHPYRPDEREEHTKLCEKNH) is makorin-type Cys-His. The RING-type zinc-finger motif lies at 216–274 (CSVCLDRVLSKPTAAERKFGLLSECDHPFCISCIRNWRNNSPTSGMDVNSALRACPICR). The segment at 303-332 (KLKSIDCKYFDFGTGTCPFGSSCFYKHAYR) adopts a C3H1-type 4 zinc-finger fold.

As to expression, expressed in primary roots and leaves. Detected in vascular bundle tissues.

It carries out the reaction S-ubiquitinyl-[E2 ubiquitin-conjugating enzyme]-L-cysteine + [acceptor protein]-L-lysine = [E2 ubiquitin-conjugating enzyme]-L-cysteine + N(6)-ubiquitinyl-[acceptor protein]-L-lysine.. The protein operates within protein modification; protein ubiquitination. Functionally, E3 ubiquitin ligase catalyzing the covalent attachment of ubiquitin moieties onto substrate proteins. This is E3 ubiquitin-protein ligase makorin (MKRN) from Oryza sativa subsp. japonica (Rice).